The sequence spans 248 residues: 4-hydroxy-tetrahydrodipicolinate reductase (248 aa).

An NAD(+)-binding site is contributed by Asp28. Lys29 serves as a coordination point for NADP(+). NAD(+) contacts are provided by residues 78-80 (ATT) and 102-105 (SYNM). The active-site Proton donor/acceptor is His134. His135 serves as a coordination point for (S)-2,3,4,5-tetrahydrodipicolinate. Lys138 serves as the catalytic Proton donor. (S)-2,3,4,5-tetrahydrodipicolinate is bound at residue 144–145 (GT).

Belongs to the DapB family.

The protein resides in the cytoplasm. The catalysed reaction is (S)-2,3,4,5-tetrahydrodipicolinate + NAD(+) + H2O = (2S,4S)-4-hydroxy-2,3,4,5-tetrahydrodipicolinate + NADH + H(+). It catalyses the reaction (S)-2,3,4,5-tetrahydrodipicolinate + NADP(+) + H2O = (2S,4S)-4-hydroxy-2,3,4,5-tetrahydrodipicolinate + NADPH + H(+). The protein operates within amino-acid biosynthesis; L-lysine biosynthesis via DAP pathway; (S)-tetrahydrodipicolinate from L-aspartate: step 4/4. Functionally, catalyzes the conversion of 4-hydroxy-tetrahydrodipicolinate (HTPA) to tetrahydrodipicolinate. In Exiguobacterium sibiricum (strain DSM 17290 / CCUG 55495 / CIP 109462 / JCM 13490 / 255-15), this protein is 4-hydroxy-tetrahydrodipicolinate reductase.